The sequence spans 246 residues: Polyhedrin (246 aa).

It belongs to the polyhedrin family.

Major component of the virus occlusion bodies, which are large proteinaceous structures (polyhedra), that protect the virus from the outside environment for extended periods until they are ingested by insect larvae. This chain is Polyhedrin (PH), found in Mamestra brassicae nuclear polyhedrosis virus (MbNPV).